Consider the following 155-residue polypeptide: Small ribosomal subunit protein uS7cz/uS7cy (155 aa).

This sequence belongs to the universal ribosomal protein uS7 family. Part of the 30S ribosomal subunit.

The protein resides in the plastid. Its subcellular location is the chloroplast. One of the primary rRNA binding proteins, it binds directly to 16S rRNA where it nucleates assembly of the head domain of the 30S subunit. This chain is Small ribosomal subunit protein uS7cz/uS7cy (rps7-A), found in Phalaenopsis aphrodite subsp. formosana (Moth orchid).